We begin with the raw amino-acid sequence, 479 residues long: Aspartyl/glutamyl-tRNA(Asn/Gln) amidotransferase subunit B (479 aa).

This sequence belongs to the GatB/GatE family. GatB subfamily. Heterotrimer of A, B and C subunits.

It catalyses the reaction L-glutamyl-tRNA(Gln) + L-glutamine + ATP + H2O = L-glutaminyl-tRNA(Gln) + L-glutamate + ADP + phosphate + H(+). The enzyme catalyses L-aspartyl-tRNA(Asn) + L-glutamine + ATP + H2O = L-asparaginyl-tRNA(Asn) + L-glutamate + ADP + phosphate + 2 H(+). In terms of biological role, allows the formation of correctly charged Asn-tRNA(Asn) or Gln-tRNA(Gln) through the transamidation of misacylated Asp-tRNA(Asn) or Glu-tRNA(Gln) in organisms which lack either or both of asparaginyl-tRNA or glutaminyl-tRNA synthetases. The reaction takes place in the presence of glutamine and ATP through an activated phospho-Asp-tRNA(Asn) or phospho-Glu-tRNA(Gln). This Streptococcus pyogenes serotype M12 (strain MGAS2096) protein is Aspartyl/glutamyl-tRNA(Asn/Gln) amidotransferase subunit B.